We begin with the raw amino-acid sequence, 580 residues long: E3 ubiquitin-protein ligase TRIM45 (580 aa).

The RING-type zinc-finger motif lies at 29–98 (CPLCMGLFKA…QIGILCPVCD (70 aa)). 2 B box-type zinc fingers span residues 130–176 (GQGL…MVDL) and 186–227 (GKPI…CDFT). Positions 135, 138, 158, 162, 191, 194, 214, and 219 each coordinate Zn(2+). The stretch at 281–335 (SEGYIKAIEEHRDKLLKQLEDIRVQKENSLQLQKAQLEQLLADMRTGVEFTEHLL) forms a coiled coil. The Filamin repeat unit spans residues 394–497 (TKEVDPAKCV…VQGSPFTVTV (104 aa)).

This sequence belongs to the TRIM/RBCC family.

It is found in the cytoplasm. Its subcellular location is the nucleus. The catalysed reaction is S-ubiquitinyl-[E2 ubiquitin-conjugating enzyme]-L-cysteine + [acceptor protein]-L-lysine = [E2 ubiquitin-conjugating enzyme]-L-cysteine + N(6)-ubiquitinyl-[acceptor protein]-L-lysine.. In terms of biological role, E3 ubiquitin-protein ligase that plays a role in the regulation of inflammatory response. Mechanistically, mediates the 'Lys-48'-linked polyubiquitination of TAB2, a regulatory protein of the kinase TAK1, leading to its degradation via the proteasomal pathway and inhibition of the TLR-mediated inflammatory immune response. May act as a transcriptional repressor in mitogen-activated protein kinase signaling pathway. The sequence is that of E3 ubiquitin-protein ligase TRIM45 (TRIM45) from Bos taurus (Bovine).